Consider the following 290-residue polypeptide: Ribosomal RNA small subunit methyltransferase A (290 aa).

S-adenosyl-L-methionine-binding residues include H37, V39, G64, E85, D115, and N132.

It belongs to the class I-like SAM-binding methyltransferase superfamily. rRNA adenine N(6)-methyltransferase family. RsmA subfamily.

The protein localises to the cytoplasm. The catalysed reaction is adenosine(1518)/adenosine(1519) in 16S rRNA + 4 S-adenosyl-L-methionine = N(6)-dimethyladenosine(1518)/N(6)-dimethyladenosine(1519) in 16S rRNA + 4 S-adenosyl-L-homocysteine + 4 H(+). Specifically dimethylates two adjacent adenosines (A1518 and A1519) in the loop of a conserved hairpin near the 3'-end of 16S rRNA in the 30S particle. May play a critical role in biogenesis of 30S subunits. This Acidothermus cellulolyticus (strain ATCC 43068 / DSM 8971 / 11B) protein is Ribosomal RNA small subunit methyltransferase A.